The chain runs to 322 residues: p55-v-Fos-transforming protein (322 aa).

Residues 69 to 95 (APGGRGQSIGRRGKVEQLSPEEEEKRR) form a disordered region. The 64-residue stretch at 91 to 154 (EEKRRIRRER…EKLEFILAAH (64 aa)) folds into the bZIP domain. The interval 93–113 (KRRIRRERNKMAAAKCRNRRR) is basic motif. The segment at 119-147 (LQAETDQLEEEKSALQAEIANLLKEKEKL) is leucine-zipper. Residues 298–322 (AAHRKGSSSNEPSSDSLSSPTLLAL) form a disordered region. Low complexity predominate over residues 304–316 (SSSNEPSSDSLSS).

It belongs to the bZIP family. Fos subfamily.

The protein localises to the host nucleus. The chain is p55-v-Fos-transforming protein (V-FOS) from Galliformes.